The primary structure comprises 211 residues: Thiamine-phosphate synthase (211 aa).

4-amino-2-methyl-5-(diphosphooxymethyl)pyrimidine-binding positions include 37 to 41 and asparagine 69; that span reads QLRIK. 2 residues coordinate Mg(2+): aspartate 70 and aspartate 89. Serine 108 is a 4-amino-2-methyl-5-(diphosphooxymethyl)pyrimidine binding site. Position 134–136 (134–136) interacts with 2-[(2R,5Z)-2-carboxy-4-methylthiazol-5(2H)-ylidene]ethyl phosphate; it reads TQT. A 4-amino-2-methyl-5-(diphosphooxymethyl)pyrimidine-binding site is contributed by lysine 137. 2-[(2R,5Z)-2-carboxy-4-methylthiazol-5(2H)-ylidene]ethyl phosphate contacts are provided by residues glycine 166 and 186–187; that span reads VS.

This sequence belongs to the thiamine-phosphate synthase family. The cofactor is Mg(2+).

It carries out the reaction 2-[(2R,5Z)-2-carboxy-4-methylthiazol-5(2H)-ylidene]ethyl phosphate + 4-amino-2-methyl-5-(diphosphooxymethyl)pyrimidine + 2 H(+) = thiamine phosphate + CO2 + diphosphate. It catalyses the reaction 2-(2-carboxy-4-methylthiazol-5-yl)ethyl phosphate + 4-amino-2-methyl-5-(diphosphooxymethyl)pyrimidine + 2 H(+) = thiamine phosphate + CO2 + diphosphate. The catalysed reaction is 4-methyl-5-(2-phosphooxyethyl)-thiazole + 4-amino-2-methyl-5-(diphosphooxymethyl)pyrimidine + H(+) = thiamine phosphate + diphosphate. It participates in cofactor biosynthesis; thiamine diphosphate biosynthesis; thiamine phosphate from 4-amino-2-methyl-5-diphosphomethylpyrimidine and 4-methyl-5-(2-phosphoethyl)-thiazole: step 1/1. Its function is as follows. Condenses 4-methyl-5-(beta-hydroxyethyl)thiazole monophosphate (THZ-P) and 2-methyl-4-amino-5-hydroxymethyl pyrimidine pyrophosphate (HMP-PP) to form thiamine monophosphate (TMP). This is Thiamine-phosphate synthase from Enterobacter sp. (strain 638).